Here is a 116-residue protein sequence, read N- to C-terminus: Flagellar hook-basal body complex protein FliE (116 aa).

It belongs to the FliE family.

The protein localises to the bacterial flagellum basal body. The protein is Flagellar hook-basal body complex protein FliE of Rhizobium rhizogenes (strain K84 / ATCC BAA-868) (Agrobacterium radiobacter).